A 32-amino-acid polypeptide reads, in one-letter code: Calcitonin (32 aa).

C1 and C7 are joined by a disulfide. P32 carries the post-translational modification Proline amide.

It belongs to the calcitonin family.

It localises to the secreted. Its function is as follows. Causes a rapid but short-lived drop in the level of calcium and phosphate in blood by promoting the incorporation of those ions in the bones. The polypeptide is Calcitonin (Aquarana catesbeiana (American bullfrog)).